The primary structure comprises 1050 residues: Self-sufficient cytochrome P450 monooxygenase CYP505E5 (1050 aa).

Cys-405 contacts heme. Residues 461–495 are disordered; sequence TATGLSRRSMLVARDGSSEESSNHPAEARGDHAPA. The region spanning 500–641 is the Flavodoxin-like domain; it reads VSFFYGSNSG…DLEAWEETSL (142 aa). FMN contacts are provided by residues 506-510 and 585-617; these read SNSGT and VFGCGHHDWTQTFYRIPILIDDLMYKAGATRLA. The 229-residue stretch at 679–907 folds into the FAD-binding FR-type domain; it reads KGLIEAKVTA…RPAKETFHLP (229 aa).

This sequence in the N-terminal section; belongs to the cytochrome P450 family. It depends on FAD as a cofactor. Requires FMN as cofactor. Heme is required as a cofactor.

The enzyme catalyses 2 oxidized [cytochrome P450] + NADPH = 2 reduced [cytochrome P450] + NADP(+) + H(+). The catalysed reaction is an organic molecule + reduced [NADPH--hemoprotein reductase] + O2 = an alcohol + oxidized [NADPH--hemoprotein reductase] + H2O + H(+). It carries out the reaction dodecanoate + reduced [NADPH--hemoprotein reductase] + O2 = 5-hydroxydodecanoate + oxidized [NADPH--hemoprotein reductase] + H2O + H(+). It catalyses the reaction tetradecanoate + reduced [NADPH--hemoprotein reductase] + O2 = 7-hydroxytetradecanoate + oxidized [NADPH--hemoprotein reductase] + H2O + H(+). The enzyme catalyses dodecan-1-ol + reduced [NADPH--hemoprotein reductase] + O2 = 1,5-dodecanediol + oxidized [NADPH--hemoprotein reductase] + H2O + H(+). The catalysed reaction is dodecan-1-ol + reduced [NADPH--hemoprotein reductase] + O2 = 1,4-dodecanediol + oxidized [NADPH--hemoprotein reductase] + H2O + H(+). It carries out the reaction dodecan-1-ol + reduced [NADPH--hemoprotein reductase] + O2 = 1,6-dodecanediol + oxidized [NADPH--hemoprotein reductase] + H2O + H(+). Self-sufficient cytochrome P450 monooxygenase that catalyzes the regioselective in-chain hydroxylation of alkanes, fatty alcohols, and fatty acids at the omega-7 position. Performs hydroxylation of C10-C16 n-alkanes and C12 and C14 fatty alcohols; and thereby enables the one step biocatalytic synthesis of rare alcohols such as 5-dodecanol and 7-tetradecanol. Converts 1-dodecanol into 1,5-dodecanediol as major product with very little sub-terminally hydroxylated products with the 1,4-dodecanediol and 1,6-dodecanediol more abundant. Converts dodecanoic acid to 5-hydroxydodecanoic acid which can be further converted into delta-dodecalactone by lactonization of the 5-hydroxy acid at low pH. Also gives sub-terminal hydroxylation of dodecanoic acid with 9-hydroxydodecanoic acid being the second most abundant product. This Aspergillus kawachii (strain NBRC 4308) (White koji mold) protein is Self-sufficient cytochrome P450 monooxygenase CYP505E5.